The primary structure comprises 103 residues: Floral defensin-like protein 1 (103 aa).

The signal sequence occupies residues 1 to 25; that stretch reads MARSICFFAVAILALMLFAAYDAEA. Disulfide bonds link Cys28-Cys72, Cys32-Cys48, Cys39-Cys59, Cys45-Cys66, and Cys49-Cys68. Residues 73 to 103 constitute a propeptide, removed in mature form; that stretch reads VFEKTEATQTETFTKDVNTLAEALLEADMMV.

This sequence belongs to the DEFL family. Post-translationally, when compared to other plant defensins, the petunia defensins have an additional fifth disulfide bond. As to expression, petals.

It localises to the secreted. It is found in the vacuole. In terms of biological role, plant defense peptide with antifungal activity against F.oxysporum and B.cinerea. The protein is Floral defensin-like protein 1 (D1) of Petunia hybrida (Petunia).